Consider the following 439-residue polypeptide: MGKPIVAIVGRPNVGKSTLFNKLAGKRIAIVQDTPGVTRDRIYAEAEWLNYKFTMIDTGGIEPKSEDIIVSQMRRQAQIAIEMANVIIFLVDGKEGLAPADEEVAQMLRKSKKPVVLVVNKIDKLKDENNAYEFYNLGIGDPVTISSSQALGLGDMLDRVVEYFKDDESDGEDDERINIAFIGKPNVGKSSLINKLLGEERLIVSDIPGTTRDSIDSYVDTEFGEFTLIDTAGLRRKSKVKEEIERYSVIRTYASIERADVCILMIDATEGISEQDQKIIGYAHDINKAILVIVNKWDLVEKDDKTMDKFKKELKVNLSFMPYAKYLFISAKTGQRVVKVLQTAKECYDNYTKRVKTGVLNDVISQAIMMKEPPIVGTKRLKIYYVTQIGTKPPTFIFFVNDPACIHFSYQRYLENQLRENFDFQGTGIKLEFRERKEK.

2 EngA-type G domains span residues 4–168 and 177–352; these read PIVA…KDDE and INIA…DNYT. GTP-binding positions include 10-17, 57-61, 120-123, 183-190, 230-234, and 295-298; these read GRPNVGKS, DTGGI, NKID, GKPNVGKS, DTAGL, and NKWD. The region spanning 353–437 is the KH-like domain; that stretch reads KRVKTGVLND…GIKLEFRERK (85 aa).

Belongs to the TRAFAC class TrmE-Era-EngA-EngB-Septin-like GTPase superfamily. EngA (Der) GTPase family. Associates with the 50S ribosomal subunit.

Functionally, GTPase that plays an essential role in the late steps of ribosome biogenesis. The protein is GTPase Der of Clostridium botulinum (strain Kyoto / Type A2).